The following is a 370-amino-acid chain: 2-Hydroxyacid oxidase 1 (370 aa).

Residues 1 to 365 form the FMN hydroxy acid dehydrogenase domain; it reads MLPRLICIND…DKTLVRKNPL (365 aa). Tyrosine 26 is a binding site for glyoxylate. Residues 79 to 81, serine 108, and glutamine 130 each bind FMN; that span reads ATA. Tyrosine 132 contacts glyoxylate. Threonine 158 lines the FMN pocket. Arginine 167 is a binding site for glyoxylate. Lysine 184 is modified (N6-succinyllysine). A phosphoserine mark is found at serine 194 and serine 230. Lysine 236 and serine 258 together coordinate FMN. Positions 260 and 263 each coordinate glyoxylate. Histidine 260 serves as the catalytic Proton acceptor. Residues 291-295 and 314-315 each bind FMN; these read DGGVR and GR. The short motif at 368 to 370 is the Microbody targeting signal element; the sequence is SKI.

The protein belongs to the FMN-dependent alpha-hydroxy acid dehydrogenase family. As to quaternary structure, homotetramer. It depends on FMN as a cofactor. Highly expressed in liver.

Its subcellular location is the peroxisome matrix. It catalyses the reaction a (2S)-2-hydroxycarboxylate + O2 = a 2-oxocarboxylate + H2O2. The catalysed reaction is glycolate + O2 = glyoxylate + H2O2. The enzyme catalyses glyoxylate + O2 + H2O = oxalate + H2O2 + H(+). It carries out the reaction 2-hydroxyhexadecanoate + O2 = 2-oxohexadecanoate + H2O2. It catalyses the reaction 2-hydroxyoctanoate + O2 = 2-oxooctanoate + H2O2. It functions in the pathway amino-acid biosynthesis; glycine biosynthesis. With respect to regulation, inhibited by its product oxalate. Inhibited by high concentrations of dichlorophenolindophenol (DCIP) in vitro. Its function is as follows. Broad substrate specificity (S)-2-hydroxy-acid oxidase that preferentially oxidizes glycolate. The glyoxylate produced by the oxidation of glycolate can then be utilized by alanine-glyoxylate aminotransferase for the peroxisomal synthesis of glycine; this pathway appears to be an important step for the detoxification of glyoxylate which, if allowed to accumulate, may be metabolized to oxalate with formation of kidney stones. Can also catalyze the oxidation of glyoxylate, and long chain hydroxyacids such as 2-hydroxyhexadecanoate and 2-hydroxyoctanoate, albeit with much lower catalytic efficiency. Active in vitro with the artificial electron acceptor 2,6-dichlorophenolindophenol (DCIP), but O2 is believed to be the physiological electron acceptor, leading to the production of H2O2. Is not active on L-lactate and 2-hydroxybutanoate. This is 2-Hydroxyacid oxidase 1 from Homo sapiens (Human).